The primary structure comprises 282 residues: MSNKIINLGSIEIANDKPFVLFGGMNVLESRDLAMSIAETYAEVTQKLGIPYVFKASFDKANRSSVNSYRGPGMEEGLKIFEEIKKTFNLPLITDVHETYQCAPVAEVVDIIQLPAFLARQTDLVVAMAKTGAIINVKKPQFLAPHEMRHIITKFNEAGNDEIILCERGSCFGYNNLVVDMLGMDEMKQSGYPVIFDATHALQRPGGRSDSAGGRRAQATELARSGMALGLAGLFIEAHPDPDNAKCDGPCALPLHQLENYLKQMKAIDDLVKSFEPIDTSK.

This sequence belongs to the KdsA family.

The protein localises to the cytoplasm. It carries out the reaction D-arabinose 5-phosphate + phosphoenolpyruvate + H2O = 3-deoxy-alpha-D-manno-2-octulosonate-8-phosphate + phosphate. It participates in carbohydrate biosynthesis; 3-deoxy-D-manno-octulosonate biosynthesis; 3-deoxy-D-manno-octulosonate from D-ribulose 5-phosphate: step 2/3. It functions in the pathway bacterial outer membrane biogenesis; lipopolysaccharide biosynthesis. The polypeptide is 2-dehydro-3-deoxyphosphooctonate aldolase (Shewanella sp. (strain W3-18-1)).